The sequence spans 151 residues: UPF0178 protein Spea_2958 (151 aa).

Belongs to the UPF0178 family.

The chain is UPF0178 protein Spea_2958 from Shewanella pealeana (strain ATCC 700345 / ANG-SQ1).